Here is a 184-residue protein sequence, read N- to C-terminus: Protein Iojap-related, mitochondrial (184 aa).

A mitochondrion-targeting transit peptide spans 1–39; sequence MLTTLRSRCSSLLLNQSWKLAPNRIFASSPSFSSSAGIS.

The protein belongs to the Iojap/RsfS family.

It localises to the mitochondrion. In terms of biological role, may be a ribosome silencing factor involved in organelle biogenesis and required for germination. In Arabidopsis thaliana (Mouse-ear cress), this protein is Protein Iojap-related, mitochondrial.